Consider the following 574-residue polypeptide: Sulfate adenylyltransferase (574 aa).

The tract at residues 1–169 is N-terminal; it reads MANSPHGGVL…IEAVNKLNHY (169 aa). The segment at 170 to 394 is catalytic; sequence DYVALRYSPA…LRESSPPRAT (225 aa). Residue Gln197 coordinates sulfate. Residues 197–200 and 291–294 contribute to the ATP site; these read QTRN and GRDH. Catalysis depends on residues Thr198, Arg199, and Asn200. A sulfate-binding site is contributed by Arg199. Sulfate is bound at residue Ala295. Val333 provides a ligand contact to ATP. The allosteric regulation domain; adenylyl-sulfate kinase-like stretch occupies residues 395–574; that stretch reads QGFTIFLTGY…LESEGYFDRL (180 aa). 3'-phosphoadenylyl sulfate contacts are provided by residues 434–437, Arg451, 477–478, and Arg516; these read DTVR and IA.

In the N-terminal section; belongs to the sulfate adenylyltransferase family. The protein in the C-terminal section; belongs to the APS kinase family. As to quaternary structure, homohexamer. Dimer of trimers.

Its subcellular location is the cytoplasm. It catalyses the reaction sulfate + ATP + H(+) = adenosine 5'-phosphosulfate + diphosphate. It functions in the pathway sulfur metabolism; hydrogen sulfide biosynthesis; sulfite from sulfate: step 1/3. Allosterically inhibited by 3'-phosphoadenosine 5'-phosphosulfate (PAPS). Its function is as follows. Catalyzes the first intracellular reaction of sulfate assimilation, forming adenosine-5'-phosphosulfate (APS) from inorganic sulfate and ATP. Plays an important role in sulfate activation as a component of the biosynthesis pathway of sulfur-containing amino acids. The chain is Sulfate adenylyltransferase from Aspergillus terreus (strain NIH 2624 / FGSC A1156).